A 204-amino-acid chain; its full sequence is N-(5'-phosphoribosyl)anthranilate isomerase (204 aa).

It belongs to the TrpF family.

The enzyme catalyses N-(5-phospho-beta-D-ribosyl)anthranilate = 1-(2-carboxyphenylamino)-1-deoxy-D-ribulose 5-phosphate. The protein operates within amino-acid biosynthesis; L-tryptophan biosynthesis; L-tryptophan from chorismate: step 3/5. This Oceanobacillus iheyensis (strain DSM 14371 / CIP 107618 / JCM 11309 / KCTC 3954 / HTE831) protein is N-(5'-phosphoribosyl)anthranilate isomerase.